A 130-amino-acid polypeptide reads, in one-letter code: Small ribosomal subunit protein uS11 (130 aa).

The protein belongs to the universal ribosomal protein uS11 family. In terms of assembly, part of the 30S ribosomal subunit. Interacts with proteins S7 and S18. Binds to IF-3.

In terms of biological role, located on the platform of the 30S subunit, it bridges several disparate RNA helices of the 16S rRNA. Forms part of the Shine-Dalgarno cleft in the 70S ribosome. This Dehalococcoides mccartyi (strain ATCC BAA-2266 / KCTC 15142 / 195) (Dehalococcoides ethenogenes (strain 195)) protein is Small ribosomal subunit protein uS11.